The sequence spans 169 residues: Probable glutathione peroxidase 2 (169 aa).

C41 is an active-site residue.

It belongs to the glutathione peroxidase family. In terms of assembly, interacts with DJ1A. Expressed in leaves, stems, flowers, green siliques and roots.

Its subcellular location is the cytoplasm. The protein localises to the cytosol. The protein resides in the nucleus. The enzyme catalyses 2 glutathione + H2O2 = glutathione disulfide + 2 H2O. Its function is as follows. May constitute a glutathione peroxidase-like protective system against oxidative stresses. In Arabidopsis thaliana (Mouse-ear cress), this protein is Probable glutathione peroxidase 2 (GPX2).